The primary structure comprises 249 residues: Ditrans,polycis-undecaprenyl-diphosphate synthase ((2E,6E)-farnesyl-diphosphate specific) (249 aa).

Residue Asp-26 is part of the active site. Asp-26 provides a ligand contact to Mg(2+). Residues 27–30 (GNGR), Trp-31, Arg-39, His-43, and 71–73 (SRE) contribute to the substrate site. Catalysis depends on Asn-74, which acts as the Proton acceptor. Residues Trp-75, Arg-77, Arg-194, and 200–202 (RIS) contribute to the substrate site. Glu-213 is a binding site for Mg(2+).

The protein belongs to the UPP synthase family. As to quaternary structure, homodimer. The cofactor is Mg(2+).

It catalyses the reaction 8 isopentenyl diphosphate + (2E,6E)-farnesyl diphosphate = di-trans,octa-cis-undecaprenyl diphosphate + 8 diphosphate. Functionally, catalyzes the sequential condensation of isopentenyl diphosphate (IPP) with (2E,6E)-farnesyl diphosphate (E,E-FPP) to yield (2Z,6Z,10Z,14Z,18Z,22Z,26Z,30Z,34E,38E)-undecaprenyl diphosphate (di-trans,octa-cis-UPP). UPP is the precursor of glycosyl carrier lipid in the biosynthesis of bacterial cell wall polysaccharide components such as peptidoglycan and lipopolysaccharide. The chain is Ditrans,polycis-undecaprenyl-diphosphate synthase ((2E,6E)-farnesyl-diphosphate specific) from Buchnera aphidicola subsp. Schizaphis graminum (strain Sg).